A 325-amino-acid polypeptide reads, in one-letter code: MEEFTGIGYFYKKSIKNQLDKKDASLLWELPYYTLLYLANCVKKHNNSNNIDLCSIINAKSGLCSENCAFCSQSLHNSSKIKEYPLKPKEDILKQAKYIEKYSNRFSIVVSGKTVNDREYNEIIDAIKDIKKETNLKVCASLGLLDNSQLKELKDLDVRIHNNLETSKEYFDKICTTHTYDDKVKSITMAKKIGLEVCSGGIIGLGESLENRINLFYELKELDVEGIPINIYNPIKGTKTYELLNNNAIKQITPIEALKSIAICKLILPNKDVRLCGGREYNLRDWQSLSLLAIDGLMIGNYLTTNGRNIEDDIKMIVDGGFDGK.

One can recognise a Radical SAM core domain in the interval 46–270 (NNSNNIDLCS…IAICKLILPN (225 aa)). [4Fe-4S] cluster is bound by residues Cys64, Cys68, and Cys71. Residues Ser107, Cys139, Cys198, and Arg274 each contribute to the [2Fe-2S] cluster site.

The protein belongs to the radical SAM superfamily. Biotin synthase family. As to quaternary structure, homodimer. The cofactor is [4Fe-4S] cluster. It depends on [2Fe-2S] cluster as a cofactor.

The catalysed reaction is (4R,5S)-dethiobiotin + (sulfur carrier)-SH + 2 reduced [2Fe-2S]-[ferredoxin] + 2 S-adenosyl-L-methionine = (sulfur carrier)-H + biotin + 2 5'-deoxyadenosine + 2 L-methionine + 2 oxidized [2Fe-2S]-[ferredoxin]. The protein operates within cofactor biosynthesis; biotin biosynthesis; biotin from 7,8-diaminononanoate: step 2/2. Catalyzes the conversion of dethiobiotin (DTB) to biotin by the insertion of a sulfur atom into dethiobiotin via a radical-based mechanism. The protein is Biotin synthase of Methanococcus aeolicus (strain ATCC BAA-1280 / DSM 17508 / OCM 812 / Nankai-3).